Consider the following 465-residue polypeptide: ATP-dependent protease ATPase subunit HslU (465 aa).

ATP is bound by residues Val18, 60 to 65 (GVGKTE), Asp277, Glu342, and Arg414.

This sequence belongs to the ClpX chaperone family. HslU subfamily. In terms of assembly, a double ring-shaped homohexamer of HslV is capped on each side by a ring-shaped HslU homohexamer. The assembly of the HslU/HslV complex is dependent on binding of ATP.

The protein resides in the cytoplasm. In terms of biological role, ATPase subunit of a proteasome-like degradation complex; this subunit has chaperone activity. The binding of ATP and its subsequent hydrolysis by HslU are essential for unfolding of protein substrates subsequently hydrolyzed by HslV. HslU recognizes the N-terminal part of its protein substrates and unfolds these before they are guided to HslV for hydrolysis. The polypeptide is ATP-dependent protease ATPase subunit HslU (Caldicellulosiruptor saccharolyticus (strain ATCC 43494 / DSM 8903 / Tp8T 6331)).